The chain runs to 94 residues: MFKVNEYFDAKVASIAFQTETKPATIGVMAPGDYEFGTSEHETMTVTSGALTVKLPGSADWQTFVAGETFEIEADQKFQVKVAIDTAYLCLYGE.

It belongs to the nucleoside phosphorylase PpnP family.

It carries out the reaction a purine D-ribonucleoside + phosphate = a purine nucleobase + alpha-D-ribose 1-phosphate. The enzyme catalyses adenosine + phosphate = alpha-D-ribose 1-phosphate + adenine. The catalysed reaction is cytidine + phosphate = cytosine + alpha-D-ribose 1-phosphate. It catalyses the reaction guanosine + phosphate = alpha-D-ribose 1-phosphate + guanine. It carries out the reaction inosine + phosphate = alpha-D-ribose 1-phosphate + hypoxanthine. The enzyme catalyses thymidine + phosphate = 2-deoxy-alpha-D-ribose 1-phosphate + thymine. The catalysed reaction is uridine + phosphate = alpha-D-ribose 1-phosphate + uracil. It catalyses the reaction xanthosine + phosphate = alpha-D-ribose 1-phosphate + xanthine. In terms of biological role, catalyzes the phosphorolysis of diverse nucleosides, yielding D-ribose 1-phosphate and the respective free bases. Can use uridine, adenosine, guanosine, cytidine, thymidine, inosine and xanthosine as substrates. Also catalyzes the reverse reactions. The polypeptide is Pyrimidine/purine nucleoside phosphorylase (Alcanivorax borkumensis (strain ATCC 700651 / DSM 11573 / NCIMB 13689 / SK2)).